The sequence spans 438 residues: Exosome complex component RRP45 (438 aa).

Phosphoserine is present on serine 65. Residue lysine 297 is modified to N6-acetyllysine; alternate. Residue lysine 297 forms a Glycyl lysine isopeptide (Lys-Gly) (interchain with G-Cter in SUMO1); alternate linkage. Lysine 297 participates in a covalent cross-link: Glycyl lysine isopeptide (Lys-Gly) (interchain with G-Cter in SUMO2); alternate. Phosphoserine is present on residues serine 306 and serine 346. Disordered regions lie at residues 337–365 and 377–438; these read AQIG…GGID and TGEV…RTAN. The segment covering 349–364 has biased composition (acidic residues); the sequence is DLEDSEKEEEEEEGGI. Phosphoserine occurs at positions 393 and 395. Basic residues predominate over residues 427 to 438; it reads QGKRKKKKRTAN.

The protein belongs to the RNase PH family. Component of the RNA exosome core complex (Exo-9), composed of EXOSC1, EXOSC2, EXOSC3, EXOSC4, EXOSC5, EXOSC6, EXOSC7, EXOSC8 and EXOSC9; within the complex interacts with EXOSC3, EXOSC4, EXOSC5 and DIS3. The catalytically inactive RNA exosome core complex (Exo-9) associates with the catalytic subunit EXOSC10/RRP6. Exo-9 may associate with DIS3 to form the nucleolar exosome complex, or DIS3L to form the cytoplasmic exosome complex. Exo-9 is formed by a hexameric base ring consisting of the heterodimers EXOSC4-EXOSC9, EXOSC5-EXOSC8 and EXOSC6-EXOSC7, and a cap ring consisting of EXOSC1, EXOSC2 and EXOSC3. The RNA exosome complex associates with cofactors C1D/RRP47, MPHOSPH6/MPP6 and MTREX/MTR4. Interacts (via C-terminus region) with SETX (via N-terminus domain); the interaction enhances SETX sumoylation. Interacts with DIS3; the interaction is direct.

The protein resides in the cytoplasm. It localises to the nucleus. Its subcellular location is the nucleolus. The protein localises to the nucleoplasm. Functionally, non-catalytic component of the RNA exosome complex which has 3'-&gt;5' exoribonuclease activity and participates in a multitude of cellular RNA processing and degradation events. In the nucleus, the RNA exosome complex is involved in proper maturation of stable RNA species such as rRNA, snRNA and snoRNA, in the elimination of RNA processing by-products and non-coding 'pervasive' transcripts, such as antisense RNA species and promoter-upstream transcripts (PROMPTs), and of mRNAs with processing defects, thereby limiting or excluding their export to the cytoplasm. The RNA exosome may be involved in Ig class switch recombination (CSR) and/or Ig variable region somatic hypermutation (SHM) by targeting AICDA deamination activity to transcribed dsDNA substrates. In the cytoplasm, the RNA exosome complex is involved in general mRNA turnover and specifically degrades inherently unstable mRNAs containing AU-rich elements (AREs) within their 3' untranslated regions, and in RNA surveillance pathways, preventing translation of aberrant mRNAs. It seems to be involved in degradation of histone mRNA. The catalytic inactive RNA exosome core complex of 9 subunits (Exo-9) is proposed to play a pivotal role in the binding and presentation of RNA for ribonucleolysis, and to serve as a scaffold for the association with catalytic subunits and accessory proteins or complexes. EXOSC9 binds to ARE-containing RNAs. In Mus musculus (Mouse), this protein is Exosome complex component RRP45 (Exosc9).